Consider the following 119-residue polypeptide: Large ribosomal subunit protein uL18 (119 aa).

This sequence belongs to the universal ribosomal protein uL18 family. In terms of assembly, part of the 50S ribosomal subunit; part of the 5S rRNA/L5/L18/L25 subcomplex. Contacts the 5S and 23S rRNAs.

In terms of biological role, this is one of the proteins that bind and probably mediate the attachment of the 5S RNA into the large ribosomal subunit, where it forms part of the central protuberance. This Dinoroseobacter shibae (strain DSM 16493 / NCIMB 14021 / DFL 12) protein is Large ribosomal subunit protein uL18.